We begin with the raw amino-acid sequence, 491 residues long: uncharacterized protein (491 aa).

Residue W99 participates in substrate binding. N137 contributes to the Ca(2+) binding site. A substrate-binding site is contributed by H138. Residues E177 and D190 each contribute to the Ca(2+) site. Position 219 (R219) interacts with substrate. The Ca(2+) site is built by D221, H225, and E245. D221 acts as the Nucleophile in catalysis. 224-225 (KH) provides a ligand contact to substrate. E245 serves as the catalytic Proton donor. Substrate is bound by residues G249, H312, and R360.

It belongs to the glycosyl hydrolase 13 family. Ca(2+) serves as cofactor.

Its subcellular location is the cytoplasm. The protein localises to the nucleus. This is an uncharacterized protein from Schizosaccharomyces pombe (strain 972 / ATCC 24843) (Fission yeast).